The chain runs to 269 residues: uncharacterized protein (269 aa).

103–110 contributes to the ATP binding site; that stretch reads GIFTMGKS.

This is an uncharacterized protein from Mycoplasma pneumoniae (strain ATCC 29342 / M129 / Subtype 1) (Mycoplasmoides pneumoniae).